The primary structure comprises 414 residues: tRNA(Ile)-lysidine synthase (414 aa).

13–18 (SGGIDS) is an ATP binding site.

Belongs to the tRNA(Ile)-lysidine synthase family.

The protein localises to the cytoplasm. It carries out the reaction cytidine(34) in tRNA(Ile2) + L-lysine + ATP = lysidine(34) in tRNA(Ile2) + AMP + diphosphate + H(+). Functionally, ligates lysine onto the cytidine present at position 34 of the AUA codon-specific tRNA(Ile) that contains the anticodon CAU, in an ATP-dependent manner. Cytidine is converted to lysidine, thus changing the amino acid specificity of the tRNA from methionine to isoleucine. This is tRNA(Ile)-lysidine synthase from Thermotoga maritima (strain ATCC 43589 / DSM 3109 / JCM 10099 / NBRC 100826 / MSB8).